Consider the following 374-residue polypeptide: Carbamoyl phosphate synthase small chain (374 aa).

A CPSase region spans residues 1–186 (MTEPAILVLE…DRNEWKRAAP (186 aa)). 3 residues coordinate L-glutamine: S47, G237, and G239. One can recognise a Glutamine amidotransferase type-1 domain in the interval 189–374 (KVVAYDYGVK…RFITMMAAQS (186 aa)). Residue C265 is the Nucleophile of the active site. Residues L266, Q269, N307, G309, and F310 each contribute to the L-glutamine site. Residues H349 and E351 contribute to the active site.

The protein belongs to the CarA family. As to quaternary structure, composed of two chains; the small (or glutamine) chain promotes the hydrolysis of glutamine to ammonia, which is used by the large (or ammonia) chain to synthesize carbamoyl phosphate. Tetramer of heterodimers (alpha,beta)4.

It carries out the reaction hydrogencarbonate + L-glutamine + 2 ATP + H2O = carbamoyl phosphate + L-glutamate + 2 ADP + phosphate + 2 H(+). It catalyses the reaction L-glutamine + H2O = L-glutamate + NH4(+). It functions in the pathway amino-acid biosynthesis; L-arginine biosynthesis; carbamoyl phosphate from bicarbonate: step 1/1. Its pathway is pyrimidine metabolism; UMP biosynthesis via de novo pathway; (S)-dihydroorotate from bicarbonate: step 1/3. In terms of biological role, small subunit of the glutamine-dependent carbamoyl phosphate synthetase (CPSase). CPSase catalyzes the formation of carbamoyl phosphate from the ammonia moiety of glutamine, carbonate, and phosphate donated by ATP, constituting the first step of 2 biosynthetic pathways, one leading to arginine and/or urea and the other to pyrimidine nucleotides. The small subunit (glutamine amidotransferase) binds and cleaves glutamine to supply the large subunit with the substrate ammonia. This is Carbamoyl phosphate synthase small chain from Xylella fastidiosa (strain 9a5c).